Consider the following 212-residue polypeptide: Thymidylate kinase (212 aa).

11–18 is an ATP binding site; it reads GPEGAGKT.

Belongs to the thymidylate kinase family.

The enzyme catalyses dTMP + ATP = dTDP + ADP. Its function is as follows. Phosphorylation of dTMP to form dTDP in both de novo and salvage pathways of dTTP synthesis. The sequence is that of Thymidylate kinase from Streptococcus pneumoniae (strain CGSP14).